Consider the following 410-residue polypeptide: Platelet-activating factor acetylhydrolase IB subunit beta (410 aa).

A required for self-association and interaction with PAFAH1B2 and PAFAH1B3 region spans residues 1–38; it reads MVLSQRQRDELNRAIADYLRSNGYEEAYSVFKKEAELD. The interval 1-66 is interaction with NDE1; the sequence is MVLSQRQRDE…SVIRLQKKVM (66 aa). The interval 1 to 102 is interaction with NDEL1; it reads MVLSQRQRDE…EWIPRPPEKY (102 aa). The region spanning 7 to 39 is the LisH domain; it reads QRDELNRAIADYLRSNGYEEAYSVFKKEAELDV. N6-acetyllysine is present on Lys53. Positions 56 to 82 form a coiled coil; the sequence is TSVIRLQKKVMELESKLNEAKEEFTSG. The interaction with dynein and dynactin stretch occupies residues 83-410; sequence GPLGQKRDPK…DQTVKVWECR (328 aa). WD repeat units lie at residues 106–147, 148–187, 190–229, 232–271, 274–333, 336–377, and 378–410; these read GHRS…RTLK, GHTD…CIRT, GHDH…CVKT, GHRE…CKAE, EHEH…CLMT, GHDN…KTLN, and AHEH…WECR. Residue Ser109 is modified to Phosphoserine. The interaction with DCX stretch occupies residues 367–409; the sequence is YKNKRCMKTLNAHEHFVTSLDFHKTAPYVVTGSVDQTVKVWEC. The interval 388–410 is interaction with NDEL1; that stretch reads FHKTAPYVVTGSVDQTVKVWECR.

This sequence belongs to the WD repeat LIS1/nudF family. Component of the cytosolic PAF-AH (I) heterotetrameric enzyme, which is composed of PAFAH1B1 (beta), PAFAH1B2 (alpha2) and PAFAH1B3 (alpha1) subunits. The catalytic activity of the enzyme resides in the alpha1 (PAFAH1B3) and alpha2 (PAFAH1B2) subunits, whereas the beta subunit (PAFAH1B1) has regulatory activity. Trimer formation is not essential for the catalytic activity. Interacts with the catalytic dimer of PAF-AH (I) heterotetrameric enzyme: interacts with PAFAH1B2 homodimer (alpha2/alpha2 homodimer), PAFAH1B3 homodimer (alpha1/alpha1 homodimer) and PAFAH1B2-PAFAH1B3 heterodimer (alpha2/alpha1 heterodimer). Interacts with IQGAP1, KATNB1 and NUDC. Interacts with DAB1 when DAB1 is phosphorylated in response to RELN/reelin signaling. Can self-associate. Interacts with DCX, dynein, dynactin, NDE1, NDEL1 and RSN. Interacts with DISC1, and this interaction is enhanced by NDEL1. Interacts with INTS13. Interacts with DCDC1. Fairly ubiquitous expression in both the frontal and occipital areas of the brain.

The protein localises to the cytoplasm. The protein resides in the cytoskeleton. Its subcellular location is the microtubule organizing center. It localises to the centrosome. It is found in the spindle. The protein localises to the nucleus membrane. Its function is as follows. Regulatory subunit (beta subunit) of the cytosolic type I platelet-activating factor (PAF) acetylhydrolase (PAF-AH (I)), an enzyme that catalyzes the hydrolyze of the acetyl group at the sn-2 position of PAF and its analogs and participates in PAF inactivation. Regulates the PAF-AH (I) activity in a catalytic dimer composition-dependent manner. Required for proper activation of Rho GTPases and actin polymerization at the leading edge of locomoting cerebellar neurons and postmigratory hippocampal neurons in response to calcium influx triggered via NMDA receptors. Positively regulates the activity of the minus-end directed microtubule motor protein dynein. May enhance dynein-mediated microtubule sliding by targeting dynein to the microtubule plus end. Required for several dynein- and microtubule-dependent processes such as the maintenance of Golgi integrity, the peripheral transport of microtubule fragments and the coupling of the nucleus and centrosome. Required during brain development for the proliferation of neuronal precursors and the migration of newly formed neurons from the ventricular/subventricular zone toward the cortical plate. Neuronal migration involves a process called nucleokinesis, whereby migrating cells extend an anterior process into which the nucleus subsequently translocates. During nucleokinesis dynein at the nuclear surface may translocate the nucleus towards the centrosome by exerting force on centrosomal microtubules. May also play a role in other forms of cell locomotion including the migration of fibroblasts during wound healing. Required for dynein recruitment to microtubule plus ends and BICD2-bound cargos. May modulate the Reelin pathway through interaction of the PAF-AH (I) catalytic dimer with VLDLR. In Homo sapiens (Human), this protein is Platelet-activating factor acetylhydrolase IB subunit beta.